Reading from the N-terminus, the 86-residue chain is Large ribosomal subunit protein bL31B (86 aa).

This sequence belongs to the bacterial ribosomal protein bL31 family. Type B subfamily. In terms of assembly, part of the 50S ribosomal subunit.

In Cupriavidus taiwanensis (strain DSM 17343 / BCRC 17206 / CCUG 44338 / CIP 107171 / LMG 19424 / R1) (Ralstonia taiwanensis (strain LMG 19424)), this protein is Large ribosomal subunit protein bL31B.